The chain runs to 884 residues: Alanine--tRNA ligase (884 aa).

Positions 562, 566, 676, and 680 each coordinate Zn(2+).

It belongs to the class-II aminoacyl-tRNA synthetase family. It depends on Zn(2+) as a cofactor.

The protein localises to the cytoplasm. It carries out the reaction tRNA(Ala) + L-alanine + ATP = L-alanyl-tRNA(Ala) + AMP + diphosphate. Catalyzes the attachment of alanine to tRNA(Ala) in a two-step reaction: alanine is first activated by ATP to form Ala-AMP and then transferred to the acceptor end of tRNA(Ala). Also edits incorrectly charged Ser-tRNA(Ala) and Gly-tRNA(Ala) via its editing domain. The protein is Alanine--tRNA ligase of Jannaschia sp. (strain CCS1).